A 221-amino-acid polypeptide reads, in one-letter code: Lipoprotein-releasing system ATP-binding protein LolD (221 aa).

Residues 6–220 (LILKNISKHY…YKLKHGLLNI (215 aa)) enclose the ABC transporter domain. ATP is bound at residue 42-49 (GSSGSGKS).

Belongs to the ABC transporter superfamily. Lipoprotein translocase (TC 3.A.1.125) family. As to quaternary structure, the complex is composed of two ATP-binding proteins (LolD) and two transmembrane proteins (LolC and LolE).

Its subcellular location is the cell inner membrane. Part of the ABC transporter complex LolCDE involved in the translocation of mature outer membrane-directed lipoproteins, from the inner membrane to the periplasmic chaperone, LolA. Responsible for the formation of the LolA-lipoprotein complex in an ATP-dependent manner. This chain is Lipoprotein-releasing system ATP-binding protein LolD, found in Rickettsia felis (strain ATCC VR-1525 / URRWXCal2) (Rickettsia azadi).